Consider the following 641-residue polypeptide: SUMO-activating enzyme subunit 2-A (641 aa).

ATP contacts are provided by residues 24-29 (GAGGIG), D48, 56-59 (NLNR), K72, 95-96 (SI), and 117-122 (DNNAAR). Residues C158 and C161 each coordinate Zn(2+). C173 serves as the catalytic Glycyl thioester intermediate. Residues C439 and C442 each coordinate Zn(2+). Residues 546–641 (GDVPEKGPQK…EEDDDIIALD (96 aa)) form a disordered region. Over residues 548 to 561 (VPEKGPQKPPEESV) the composition is skewed to basic and acidic residues. The segment covering 562–579 (KNITNGSDDGAQPSTSKA) has biased composition (polar residues). Acidic residues-rich tracts occupy residues 582 to 594 (QDDV…DEES) and 630 to 641 (PVEEDDDIIALD).

Belongs to the ubiquitin-activating E1 family. Heterodimer of sae1 and uba2/sae2. The heterodimer corresponds to the two domains that are encoded on a single polypeptide chain in ubiquitin-activating enzyme E1. Interacts with ube2i.

It is found in the nucleus. Its pathway is protein modification; protein sumoylation. The heterodimer acts as an E1 ligase for sumo1, sumo2, and sumo3. It mediates ATP-dependent activation of sumo proteins followed by formation of a thioester bond between a sumo protein and a conserved active site cysteine residue on uba2/sae2. In Xenopus laevis (African clawed frog), this protein is SUMO-activating enzyme subunit 2-A (uba2-a).